The sequence spans 212 residues: Thymidylate kinase (212 aa).

Ala-2 is subject to N-acetylalanine. ATP contacts are provided by residues 16-21 (RAGKTT) and Arg-97. An LID region spans residues 133–157 (LQLQLLDAAARGEFGLERYETGTFQ). ATP-binding residues include Lys-182 and Arg-192.

Belongs to the thymidylate kinase family. In terms of assembly, homodimer. Requires Mg(2+) as cofactor.

The enzyme catalyses dTMP + ATP = dTDP + ADP. It participates in pyrimidine metabolism; dTTP biosynthesis. In terms of biological role, catalyzes the phosphorylation of thymidine monophosphate (dTMP) to thymidine diphosphate (dTDP), the immediate precursor for the DNA building block dTTP, with ATP as the preferred phosphoryl donor in the presence of Mg(2+). The sequence is that of Thymidylate kinase (Dtymk) from Mus musculus (Mouse).